The primary structure comprises 258 residues: Probable parvulin-type peptidyl-prolyl cis-trans isomerase (258 aa).

An N-terminal signal peptide occupies residues 1 to 19; it reads MKRIAMLAAACVIAVPAFA. The region spanning 127–219 is the PpiC domain; sequence KMEYKVRHIL…FGWHVIQVDD (93 aa).

It belongs to the PpiC/parvulin rotamase family.

The enzyme catalyses [protein]-peptidylproline (omega=180) = [protein]-peptidylproline (omega=0). In Bordetella parapertussis (strain 12822 / ATCC BAA-587 / NCTC 13253), this protein is Probable parvulin-type peptidyl-prolyl cis-trans isomerase.